We begin with the raw amino-acid sequence, 208 residues long: MSYKLTYFPIRGLAEPIRLLLVDQGIKFTDEHIPKDDFVSIKSQFQFGQLPCFYDGDQQIVQSGAILRHLARKFNLNGENNAETSYVDMFYEGIRDLHSKYTRMIYEAYETQKDPFIKNILPQELAKLEKLLATRDNGKNFILGDKISFADYVLFEELDVQQILDPHCLEKFPLLKAFHQRLGDKPKIKEYCAKRNASKMPVNGNGKQ.

In terms of domain architecture, GST N-terminal spans 1 to 78 (MSYKLTYFPI…HLARKFNLNG (78 aa)). Glutathione contacts are provided by residues tyrosine 7, lysine 42, 49–50 (QL), and 62–63 (QS). The 121-residue stretch at 80–200 (NNAETSYVDM…YCAKRNASKM (121 aa)) folds into the GST C-terminal domain.

Belongs to the GST superfamily. Pi family. As to quaternary structure, homodimer.

It carries out the reaction RX + glutathione = an S-substituted glutathione + a halide anion + H(+). Its function is as follows. Conjugation of reduced glutathione to a wide number of exogenous and endogenous hydrophobic electrophiles. This chain is Glutathione S-transferase, found in Dirofilaria immitis (Canine heartworm).